A 138-amino-acid polypeptide reads, in one-letter code: MIKLRLKRFGKKREASFRLVACNSTSRRDGRPLQELGFYNPRTKETRLDAEALRQRLSQGAQPTDAVRTLLEKGGLIEKTVRPAEIVGKLKQAAKREADAKQAAKEAAEAKAAAEAEAKAAAEAESADAGAEEAPAEA.

The segment at 92–138 is disordered; the sequence is QAAKREADAKQAAKEAAEAKAAAEAEAKAAAEAESADAGAEEAPAEA. The span at 94-122 shows a compositional bias: basic and acidic residues; it reads AKREADAKQAAKEAAEAKAAAEAEAKAAA.

The protein belongs to the bacterial ribosomal protein bS16 family.

This Synechococcus sp. (strain WH7803) protein is Small ribosomal subunit protein bS16.